The following is a 365-amino-acid chain: Outer membrane protein assembly factor BamC (365 aa).

Residues 1-16 form the signal peptide; it reads MLKKVTPLFLVAAVAA. A lipid anchor (N-palmitoyl cysteine) is attached at C17. C17 is lipidated: S-diacylglycerol cysteine.

This sequence belongs to the BamC family. Part of the Bam complex.

It localises to the cell outer membrane. Part of the outer membrane protein assembly complex, which is involved in assembly and insertion of beta-barrel proteins into the outer membrane. The protein is Outer membrane protein assembly factor BamC of Shewanella oneidensis (strain ATCC 700550 / JCM 31522 / CIP 106686 / LMG 19005 / NCIMB 14063 / MR-1).